Consider the following 469-residue polypeptide: MSRLVVVSNRIAAIEGKKESAGGLAVGIMDSLKDQGGLWFGWNGKISEEDEPLEKNQQDNITFAAFSLKQSEYDQYYLNFSNTVIWPAFHYRLDLVQYQREDYDGYCRVNEMLAGRLKPLVNEDDILWIHDYHLLPFAAACRKLGMKNRIGFFLHIPFPTSEIFNALPPRKELLEKLCEYDLVGFQAESDRQAFIENLALVTTVEDLDDDRIKAYNKLVTARVYPIGVEPESIRELAEGPLPPKLAHLRDKMNGQLIISVDRLDYSKGLPERFQAYETLLENYPQHRGNIRYFQIAPTSRGDVQAYQDIRHELETEAGRINGHFSTLEWTPLFYLNQHYERSLLMKIFRHCEVGLVTPLRDGMNLVAKEYVASQNPNDPGVLILSHFAGAANELTSALLVNPYDRDGVASALDKALSMPLSERKARYQEMIAVIKQNDIVHWCQSFLDDLKKIPSKAEIVGQAVSGATR.

Residue arginine 10 participates in D-glucose 6-phosphate binding. 22–23 (GG) contacts UDP-alpha-D-glucose. D-glucose 6-phosphate is bound by residues tyrosine 77 and aspartate 131. UDP-alpha-D-glucose contacts are provided by arginine 262 and lysine 267. Arginine 300 lines the D-glucose 6-phosphate pocket. 365 to 369 (LVAKE) contacts UDP-alpha-D-glucose.

It belongs to the glycosyltransferase 20 family. Homotetramer.

It carries out the reaction D-glucose 6-phosphate + UDP-alpha-D-glucose = alpha,alpha-trehalose 6-phosphate + UDP + H(+). Its pathway is glycan biosynthesis; trehalose biosynthesis. Probably involved in the osmoprotection via the biosynthesis of trehalose. Catalyzes the transfer of glucose from UDP-alpha-D-glucose (UDP-Glc) to D-glucose 6-phosphate (Glc-6-P) to form trehalose-6-phosphate. Acts with retention of the anomeric configuration of the UDP-sugar donor. The protein is Trehalose-6-phosphate synthase of Sodalis glossinidius (strain morsitans).